Here is a 245-residue protein sequence, read N- to C-terminus: Large ribosomal subunit protein uL4 (245 aa).

Over residues 1–13 (MSRVATSDPSVTA) the composition is skewed to polar residues. Disordered regions lie at residues 1 to 28 (MSRV…EGGS), 56 to 114 (ARQG…QRTP), and 224 to 245 (TSTA…EENK). The segment covering 59-71 (GTHDTKTRGEVRG) has biased composition (basic and acidic residues). Residues 72–83 (GGRKPYRQKGTG) are compositionally biased toward basic residues.

The protein belongs to the universal ribosomal protein uL4 family. In terms of assembly, part of the 50S ribosomal subunit.

One of the primary rRNA binding proteins, this protein initially binds near the 5'-end of the 23S rRNA. It is important during the early stages of 50S assembly. It makes multiple contacts with different domains of the 23S rRNA in the assembled 50S subunit and ribosome. Functionally, forms part of the polypeptide exit tunnel. The polypeptide is Large ribosomal subunit protein uL4 (Frankia casuarinae (strain DSM 45818 / CECT 9043 / HFP020203 / CcI3)).